The sequence spans 1005 residues: Ephrin type-A receptor 8 (1005 aa).

The N-terminal stretch at 1 to 27 (MAPARGRLPPALWVVTAAAAAATCVSA) is a signal peptide. The Extracellular portion of the chain corresponds to 28-542 (ARGEVNLLDT…KPRPRYDTRT (515 aa)). An Eph LBD domain is found at 31 to 209 (EVNLLDTSTI…YYKKCPAMVR (179 aa)). 2 Fibronectin type-III domains span residues 328–438 (PPSA…TNQA) and 439–534 (APSQ…TGKP). N-linked (GlcNAc...) asparagine glycans are attached at residues Asn340, Asn407, and Asn432. A helical transmembrane segment spans residues 543 to 563 (IVWICLTLITGLVVLLLLLIC). A mediates interaction with ANKS1A and ANKS1B region spans residues 564 to 570 (KKRHCGY). Residues 564 to 1005 (KKRHCGYSKA…TSTQGPRRHL (442 aa)) lie on the Cytoplasmic side of the membrane. The interval 589–644 (APPPVFLPLHHPPGKLPEPQFYAEPHTYEEPGRAGRSFTREIEASRIHIEKIIGSG) is mediates interaction with PIK3CG and required for endocytosis. Residue Tyr616 is modified to Phosphotyrosine; by autocatalysis. A Protein kinase domain is found at 635–896 (IHIEKIIGSG…QIVSVLDALI (262 aa)). ATP contacts are provided by residues 641–649 (IGSGDSGEV) and Lys667. The Proton acceptor role is filled by Asp760. Tyr839 is modified (phosphotyrosine; by autocatalysis). The SAM domain maps to 930–994 (GGGLTVGDWL…LGSIQTMRAQ (65 aa)). Positions 1003–1005 (RHL) match the PDZ-binding motif.

It belongs to the protein kinase superfamily. Tyr protein kinase family. Ephrin receptor subfamily. Heterotetramer upon binding of the ligand. The heterotetramer is composed of an ephrin dimer and a receptor dimer. Oligomerization is probably required to induce biological responses. May also form heterodimers with other ephrin receptors. Interacts with FYN; possible downstream effector of EPHA8 in regulation of cell adhesion. Interacts with PIK3CG; regulates integrin-mediated cell adhesion to substrate. Interacts with TIAM1; regulates clathrin-mediated endocytosis of EPHA8. Interacts with ANKS1A and ANKS1B; EPHA8 kinase activity-independent but stimulated by EPHA8 ubiquitination. Phosphorylated. Phosphorylation is stimulated upon binding of its ligands including EFNA2, EFNA3 and EFNA5. Autophosphorylation on Tyr-616 is critical for association with FYN. Autophosphorylation on Tyr-839 modulates tyrosine kinase activity. Post-translationally, ubiquitinated. Ubiquitination by CBL regulates the receptor stability and activity through proteasomal degradation. ANKS1A prevents ubiquitination and degradation.

Its subcellular location is the cell membrane. It is found in the cell projection. It localises to the early endosome membrane. It catalyses the reaction L-tyrosyl-[protein] + ATP = O-phospho-L-tyrosyl-[protein] + ADP + H(+). Functionally, receptor tyrosine kinase which binds promiscuously GPI-anchored ephrin-A family ligands residing on adjacent cells, leading to contact-dependent bidirectional signaling into neighboring cells. The signaling pathway downstream of the receptor is referred to as forward signaling while the signaling pathway downstream of the ephrin ligand is referred to as reverse signaling. The GPI-anchored ephrin-A EFNA2, EFNA3, and EFNA5 are able to activate EPHA8 through phosphorylation. With EFNA5 may regulate integrin-mediated cell adhesion and migration on fibronectin substrate but also neurite outgrowth. During development of the nervous system also plays a role in axon guidance. Downstream effectors of the EPHA8 signaling pathway include FYN which promotes cell adhesion upon activation by EPHA8 and the MAP kinases in the stimulation of neurite outgrowth. In Homo sapiens (Human), this protein is Ephrin type-A receptor 8 (EPHA8).